A 184-amino-acid polypeptide reads, in one-letter code: Large ribosomal subunit protein uL6 (184 aa).

It belongs to the universal ribosomal protein uL6 family. As to quaternary structure, part of the 50S ribosomal subunit.

In terms of biological role, this protein binds to the 23S rRNA, and is important in its secondary structure. It is located near the subunit interface in the base of the L7/L12 stalk, and near the tRNA binding site of the peptidyltransferase center. This Thermotoga maritima (strain ATCC 43589 / DSM 3109 / JCM 10099 / NBRC 100826 / MSB8) protein is Large ribosomal subunit protein uL6.